The chain runs to 99 residues: Ribosomal processing cysteine protease Prp (99 aa).

H16 functions as the Proton donor in the catalytic mechanism. C28 serves as the catalytic Nucleophile.

This sequence belongs to the Prp family. In terms of assembly, homodimer.

An essential cysteine protease that cleaves the N-terminus from ribosomal protein bL27. In Mycoplasma genitalium (strain ATCC 33530 / DSM 19775 / NCTC 10195 / G37) (Mycoplasmoides genitalium), this protein is Ribosomal processing cysteine protease Prp.